Reading from the N-terminus, the 259-residue chain is MLLAIDCGNTNTVFSIWDGEKFLCTLRTSTHHARTADAYFTWYSTLIKHYGIETDITDVIISSTVPRVVFNLRVFADRFFGCRPLVVGKPDCLLPVQPRVDAGTAVGPDRLVNAAAAYDRHGGNKIVVDFGTATTFDVVDDDGAYVGGVIAPGVNLSLEALHMAAAALPHVDIAKPQAVIGTNTVACMQSGVFWGYVGLVKEICARIKGERDRDMQVIATGGLAALFQQSEILFDIFEDDLTMHGLTVIHRHNKENGTV.

Residue 6–13 (DCGNTNTV) participates in ATP binding. A substrate-binding site is contributed by 107-110 (GPDR). Aspartate 109 (proton acceptor) is an active-site residue. K(+) is bound at residue aspartate 129. Residue threonine 132 participates in ATP binding. Threonine 184 provides a ligand contact to substrate.

This sequence belongs to the type III pantothenate kinase family. As to quaternary structure, homodimer. It depends on NH4(+) as a cofactor. Requires K(+) as cofactor.

The protein resides in the cytoplasm. It carries out the reaction (R)-pantothenate + ATP = (R)-4'-phosphopantothenate + ADP + H(+). It participates in cofactor biosynthesis; coenzyme A biosynthesis; CoA from (R)-pantothenate: step 1/5. Functionally, catalyzes the phosphorylation of pantothenate (Pan), the first step in CoA biosynthesis. This chain is Type III pantothenate kinase, found in Ruegeria pomeroyi (strain ATCC 700808 / DSM 15171 / DSS-3) (Silicibacter pomeroyi).